A 397-amino-acid chain; its full sequence is Cell division protein DivIB (397 aa).

Residues 1–138 (MTTKDKGDQK…RIERIHLYRA (138 aa)) lie on the Cytoplasmic side of the membrane. Over residues 24 to 37 (QEYLEKKSQEKASE) the composition is skewed to basic and acidic residues. The tract at residues 24–115 (QEYLEKKSQE…DRTEKFIGQA (92 aa)) is disordered. Over residues 74–103 (ASDDDETNESEESEDVEEPEEENIEESSDV) the composition is skewed to acidic residues. The chain crosses the membrane as a helical span at residues 139-159 (LPVLVISSLLILLSLYFITPL). The 72-residue stretch at 160-231 (GSLKNLVVTG…ITFKIQVTEY (72 aa)) folds into the POTRA domain. Residues 160-397 (GSLKNLVVTG…PSDVTDETNN (238 aa)) are Extracellular-facing. Residues 360 to 397 (LVQKEEQDQEQEKEESSEETVPGETEAAPSDVTDETNN) form a disordered region. Acidic residues predominate over residues 366-377 (QDQEQEKEESSE).

Belongs to the FtsQ/DivIB family. DivIB subfamily.

It is found in the cell membrane. Its function is as follows. Cell division protein that may be involved in stabilizing or promoting the assembly of the division complex. The chain is Cell division protein DivIB from Streptococcus gordonii (strain Challis / ATCC 35105 / BCRC 15272 / CH1 / DL1 / V288).